Here is a 289-residue protein sequence, read N- to C-terminus: Energy-coupling factor transporter ATP-binding protein EcfA2 (289 aa).

One can recognise an ABC transporter domain in the interval 3-246 (IEIKDVEHRY…KDDIAALGLD (244 aa)). 40–47 (GHTGSGKS) is an ATP binding site.

It belongs to the ABC transporter superfamily. Energy-coupling factor EcfA family. In terms of assembly, forms a stable energy-coupling factor (ECF) transporter complex composed of 2 membrane-embedded substrate-binding proteins (S component), 2 ATP-binding proteins (A component) and 2 transmembrane proteins (T component).

Its subcellular location is the cell membrane. ATP-binding (A) component of a common energy-coupling factor (ECF) ABC-transporter complex. Unlike classic ABC transporters this ECF transporter provides the energy necessary to transport a number of different substrates. The polypeptide is Energy-coupling factor transporter ATP-binding protein EcfA2 (Bacillus licheniformis (strain ATCC 14580 / DSM 13 / JCM 2505 / CCUG 7422 / NBRC 12200 / NCIMB 9375 / NCTC 10341 / NRRL NRS-1264 / Gibson 46)).